A 360-amino-acid polypeptide reads, in one-letter code: Mannonate dehydratase (360 aa).

This sequence belongs to the mannonate dehydratase family. It depends on Fe(2+) as a cofactor. Mn(2+) is required as a cofactor.

The catalysed reaction is D-mannonate = 2-dehydro-3-deoxy-D-gluconate + H2O. The protein operates within carbohydrate metabolism; pentose and glucuronate interconversion. Catalyzes the dehydration of D-mannonate. This is Mannonate dehydratase from Thermotoga sp. (strain RQ2).